A 225-amino-acid chain; its full sequence is PKHD-type hydroxylase YbiX (225 aa).

Residues 78–177 (TLSTPLFNRY…RVASFMWIQS (100 aa)) enclose the Fe2OG dioxygenase domain. The Fe cation site is built by His-96, Asp-98, and His-158. Arg-168 serves as a coordination point for 2-oxoglutarate.

Fe(2+) serves as cofactor. It depends on L-ascorbate as a cofactor.

In Escherichia coli O81 (strain ED1a), this protein is PKHD-type hydroxylase YbiX.